The chain runs to 74 residues: UPF0346 protein RBAM_019500 (74 aa).

Belongs to the UPF0346 family.

In Bacillus velezensis (strain DSM 23117 / BGSC 10A6 / LMG 26770 / FZB42) (Bacillus amyloliquefaciens subsp. plantarum), this protein is UPF0346 protein RBAM_019500.